The sequence spans 869 residues: Alanine--tRNA ligase (869 aa).

Zn(2+)-binding residues include His-559, His-563, Cys-660, and His-664.

Belongs to the class-II aminoacyl-tRNA synthetase family. The cofactor is Zn(2+).

The protein localises to the cytoplasm. It catalyses the reaction tRNA(Ala) + L-alanine + ATP = L-alanyl-tRNA(Ala) + AMP + diphosphate. Its function is as follows. Catalyzes the attachment of alanine to tRNA(Ala) in a two-step reaction: alanine is first activated by ATP to form Ala-AMP and then transferred to the acceptor end of tRNA(Ala). Also edits incorrectly charged Ser-tRNA(Ala) and Gly-tRNA(Ala) via its editing domain. The protein is Alanine--tRNA ligase of Herminiimonas arsenicoxydans.